Consider the following 209-residue polypeptide: Octanoyltransferase (209 aa).

Residues 29–209 (GSGDELVWML…KKSFVKIFGE (181 aa)) form the BPL/LPL catalytic domain. Residues 68–75 (RGGKYTYH), 141–143 (AIG), and 154–156 (GIA) contribute to the substrate site. Cys172 acts as the Acyl-thioester intermediate in catalysis.

Belongs to the LipB family.

Its subcellular location is the cytoplasm. The catalysed reaction is octanoyl-[ACP] + L-lysyl-[protein] = N(6)-octanoyl-L-lysyl-[protein] + holo-[ACP] + H(+). It participates in protein modification; protein lipoylation via endogenous pathway; protein N(6)-(lipoyl)lysine from octanoyl-[acyl-carrier-protein]: step 1/2. Its function is as follows. Catalyzes the transfer of endogenously produced octanoic acid from octanoyl-acyl-carrier-protein onto the lipoyl domains of lipoate-dependent enzymes. Lipoyl-ACP can also act as a substrate although octanoyl-ACP is likely to be the physiological substrate. The chain is Octanoyltransferase from Neorickettsia sennetsu (strain ATCC VR-367 / Miyayama) (Ehrlichia sennetsu).